The primary structure comprises 343 residues: MLNLTKLHCNGDPEMAKKYNRGVKLAISLAESTPGQFKLIESPVNSFLIVTNLTVEDTVPHATHPPAGEGLDFSCLSLSRLNALDAIVQPGYDNNSLDAQGHQQPPPAGVRSLTKLTKDPYVTYKLTEWMWALRLNKDILINQALKLLGNPSTWTFCHPTDPLPWMWLLFYGPRSRCQEATCVYAKYFSTAGPVLLPPFFYDPGRDIQSFMSQACKFVKYFYDGEGLDSVLKDNNVPFDDSRIAEVLKALPSVSGSGLVLNKSCLLCCIYKQNLTSFHNVPDVSGGCLILQGAERHTDSAIGRSRCQTTGDIILWPSYNINSLVALFKSNEPSINERADTPGH.

This Alcelaphine herpesvirus 1 (strain C500) (AlHV-1) protein is Gene 34 protein (34).